The primary structure comprises 255 residues: Small ribosomal subunit protein uS3c (255 aa).

One can recognise a KH type-2 domain in the interval 51–124 (IRESSNTSYG…NKNQNKNTGQ (74 aa)). The tract at residues 96–121 (EKNRDKNKSNKNSALDQSVNKNQNKN) is disordered. Residues 108–121 (SALDQSVNKNQNKN) are compositionally biased toward polar residues.

Belongs to the universal ribosomal protein uS3 family. As to quaternary structure, part of the 30S ribosomal subunit.

It is found in the plastid. The protein resides in the chloroplast. This chain is Small ribosomal subunit protein uS3c (rps3), found in Chaetosphaeridium globosum (Charophycean green alga).